A 563-amino-acid polypeptide reads, in one-letter code: MLKNPSVKYRAFAPVPLSDRQWPSKTITKPPIWMSTDLRDGNQALFEPMNAERKLRMFEMLVKIGFKEIEAGFPSASDTDFGFIRKLVEEGRVPDDVHIEVLTQARPELIARTMESLKGAKNAIVHVYNATAPNFREVVFQQGKQGVKAIATESARQIKEIAATQPETNWTFQYSPEVFSGTELDFAKEVVDAVTEIWEAGPERKVVINLPATVEMATPNIYADQIEWMHRNLERRDGIILSVHPHNDRGTAVAAAELAIMAGADRVEGCLFGNGERTGNVDLVTLALNLYSQGIDPGLDFAQINEIARTAEYCTQLPIHPRHPYVGDLVFTAFSGSHQDAIKKGLAAYKAGDIWQVPYLPLDPKDLGRTYESIIRVNSQSGKGGVSYLLEAEYDLRLPRRLQVEFSSAVQRVTDDTGKEVRAADIWRIFEEEYLTRAEPIEYLSHSLYDESGKQGVKIRIRRFGKEEELSGSGNGPIDAAMDALKLGVELRHYEEHSIGSGTDAKAVAFMEVADPEHPGDLFGVGIDANIITASFKAMLSAANRAAARRPKSEWARLCGGAE.

Residues 31-305 (PIWMSTDLRD…DPGLDFAQIN (275 aa)) form the Pyruvate carboxyltransferase domain. Positions 40, 244, 246, and 280 each coordinate Mg(2+). Positions 437–563 (RAEPIEYLSH…EWARLCGGAE (127 aa)) are regulatory domain.

Belongs to the alpha-IPM synthase/homocitrate synthase family. LeuA type 2 subfamily. In terms of assembly, homodimer. Requires Mg(2+) as cofactor.

The protein resides in the cytoplasm. The enzyme catalyses 3-methyl-2-oxobutanoate + acetyl-CoA + H2O = (2S)-2-isopropylmalate + CoA + H(+). Its pathway is amino-acid biosynthesis; L-leucine biosynthesis; L-leucine from 3-methyl-2-oxobutanoate: step 1/4. Its function is as follows. Catalyzes the condensation of the acetyl group of acetyl-CoA with 3-methyl-2-oxobutanoate (2-ketoisovalerate) to form 3-carboxy-3-hydroxy-4-methylpentanoate (2-isopropylmalate). In Parvibaculum lavamentivorans (strain DS-1 / DSM 13023 / NCIMB 13966), this protein is 2-isopropylmalate synthase.